The sequence spans 208 residues: Uracil phosphoribosyltransferase (208 aa).

5-phospho-alpha-D-ribose 1-diphosphate contacts are provided by residues arginine 78, arginine 103, and 130-138; that span reads DPMLATGGS. Residues isoleucine 193 and 198–200 each bind uracil; that span reads GDA. A 5-phospho-alpha-D-ribose 1-diphosphate-binding site is contributed by aspartate 199.

This sequence belongs to the UPRTase family. It depends on Mg(2+) as a cofactor.

The catalysed reaction is UMP + diphosphate = 5-phospho-alpha-D-ribose 1-diphosphate + uracil. It functions in the pathway pyrimidine metabolism; UMP biosynthesis via salvage pathway; UMP from uracil: step 1/1. With respect to regulation, allosterically activated by GTP. Functionally, catalyzes the conversion of uracil and 5-phospho-alpha-D-ribose 1-diphosphate (PRPP) to UMP and diphosphate. The protein is Uracil phosphoribosyltransferase of Roseiflexus sp. (strain RS-1).